The following is a 444-amino-acid chain: Phosphoglucosamine mutase (444 aa).

Ser102 functions as the Phosphoserine intermediate in the catalytic mechanism. Positions 102, 239, 241, and 243 each coordinate Mg(2+). Position 102 is a phosphoserine (Ser102).

Belongs to the phosphohexose mutase family. Requires Mg(2+) as cofactor. Activated by phosphorylation.

The enzyme catalyses alpha-D-glucosamine 1-phosphate = D-glucosamine 6-phosphate. In terms of biological role, catalyzes the conversion of glucosamine-6-phosphate to glucosamine-1-phosphate. The protein is Phosphoglucosamine mutase of Saccharopolyspora erythraea (strain ATCC 11635 / DSM 40517 / JCM 4748 / NBRC 13426 / NCIMB 8594 / NRRL 2338).